Consider the following 229-residue polypeptide: MTPKLIVALDFDNQDNALQLVEKLDPNHCALKVGSELFTLLGPQFVKELVRREFKVFLDLKFHDIPNTVAKACYSAAELGVWMINVHAIGGLKMLQAARESLKTYGKDRPLLIAVTVLTSFEEGELASVGIRNTLPEQATHLAMLAREAGLDGVVSSAHEVKIIKQKCGENFITVTPGIRLPNNLKDDQSRVMTPQQAIREGSDFLVIGRPITQASNPYEVVSALLRDL.

Substrate contacts are provided by residues aspartate 10, lysine 32, 59–68 (DLKFHDIPNT), threonine 119, arginine 180, glutamine 189, glycine 209, and arginine 210. Lysine 61 serves as the catalytic Proton donor.

This sequence belongs to the OMP decarboxylase family. Type 1 subfamily. Homodimer.

It carries out the reaction orotidine 5'-phosphate + H(+) = UMP + CO2. It functions in the pathway pyrimidine metabolism; UMP biosynthesis via de novo pathway; UMP from orotate: step 2/2. Functionally, catalyzes the decarboxylation of orotidine 5'-monophosphate (OMP) to uridine 5'-monophosphate (UMP). In Legionella pneumophila (strain Lens), this protein is Orotidine 5'-phosphate decarboxylase.